A 214-amino-acid chain; its full sequence is Outer-membrane lipoprotein LolB (214 aa).

Residues 1-30 form the signal peptide; it reads MKHVSSPHPCAAIASARVWLGLVLVALLAG. Cys31 carries the N-palmitoyl cysteine lipid modification. Cys31 carries S-diacylglycerol cysteine lipidation.

This sequence belongs to the LolB family. As to quaternary structure, monomer.

Its subcellular location is the cell outer membrane. Plays a critical role in the incorporation of lipoproteins in the outer membrane after they are released by the LolA protein. This is Outer-membrane lipoprotein LolB from Chromohalobacter salexigens (strain ATCC BAA-138 / DSM 3043 / CIP 106854 / NCIMB 13768 / 1H11).